Here is a 597-residue protein sequence, read N- to C-terminus: Vacuolar protein sorting-associated protein 33A (597 aa).

It belongs to the STXBP/unc-18/SEC1 family. In terms of assembly, core component of at least two putative endosomal tethering complexes, the homotypic fusion and vacuole protein sorting (HOPS) complex and the class C core vacuole/endosome tethering (CORVET) complex. Their common core is composed of the class C Vps proteins VPS11, VPS16, VPS18 and VPS33A, which in HOPS further associates with VPS39 and VPS41 and in CORVET with VPS8 and TGFBRAP1. Interacts with RAB5C, UVRAG, STX17, MON1A and MON1B. Associates with adaptor protein complex 3 (AP-3) and clathrin. Interacts with PLEKHM1. As to expression, ubiquitous.

Its subcellular location is the cytoplasmic vesicle. It is found in the late endosome membrane. The protein localises to the lysosome membrane. The protein resides in the early endosome. It localises to the autophagosome. Its subcellular location is the clathrin-coated vesicle. In terms of biological role, plays a role in vesicle-mediated protein trafficking to lysosomal compartments including the endocytic membrane transport and autophagic pathways. Believed to act as a core component of the putative HOPS and CORVET endosomal tethering complexes which are proposed to be involved in the Rab5-to-Rab7 endosome conversion probably implicating MON1A/B, and via binding SNAREs and SNARE complexes to mediate tethering and docking events during SNARE-mediated membrane fusion. The HOPS complex is proposed to be recruited to Rab7 on the late endosomal membrane and to regulate late endocytic, phagocytic and autophagic traffic towards lysosomes. The CORVET complex is proposed to function as a Rab5 effector to mediate early endosome fusion probably in specific endosome subpopulations. Required for fusion of endosomes and autophagosomes with lysosomes; the function is dependent on its association with VPS16 but not VIPAS39. The function in autophagosome-lysosome fusion implicates STX17 but not UVRAG. In Rattus norvegicus (Rat), this protein is Vacuolar protein sorting-associated protein 33A (Vps33a).